Consider the following 29-residue polypeptide: Small ribosomal subunit protein uS7 (29 aa).

Positions 1-29 (ELIGAANRDTKSFSINRKDAKERVAKAAR) are disordered. Over residues 8–29 (RDTKSFSINRKDAKERVAKAAR) the composition is skewed to basic and acidic residues.

Belongs to the universal ribosomal protein uS7 family. In terms of assembly, part of the 30S ribosomal subunit.

Its function is as follows. One of the primary rRNA binding proteins, it binds directly to 16S rRNA where it nucleates assembly of the head domain of the 30S subunit. Is located at the subunit interface close to the decoding center. The sequence is that of Small ribosomal subunit protein uS7 (rps7) from Methanosarcina thermophila.